The following is a 310-amino-acid chain: Probable RuBisCO transcriptional regulator (310 aa).

The HTH lysR-type domain maps to 6-63; that stretch reads FTLDQLRILKAIASEGSFKKAAESLYISQPAVSLQIQNLEKQLNIPIFDRANRKAVFT. The H-T-H motif DNA-binding region spans 23–42; the sequence is FKKAAESLYISQPAVSLQIQ.

The protein belongs to the LysR transcriptional regulatory family.

The protein resides in the plastid. It is found in the chloroplast. Its function is as follows. Trans-acting transcriptional regulator of RuBisCO genes (rbcL and rbcS) expression. In Guillardia theta (Cryptophyte), this protein is Probable RuBisCO transcriptional regulator (rbcR).